The primary structure comprises 184 residues: Peptidyl-tRNA hydrolase (184 aa).

Residue tyrosine 14 coordinates tRNA. Histidine 19 acts as the Proton acceptor in catalysis. TRNA is bound by residues phenylalanine 64, asparagine 66, and asparagine 112.

This sequence belongs to the PTH family. In terms of assembly, monomer.

Its subcellular location is the cytoplasm. The enzyme catalyses an N-acyl-L-alpha-aminoacyl-tRNA + H2O = an N-acyl-L-amino acid + a tRNA + H(+). Its function is as follows. Hydrolyzes ribosome-free peptidyl-tRNAs (with 1 or more amino acids incorporated), which drop off the ribosome during protein synthesis, or as a result of ribosome stalling. In terms of biological role, catalyzes the release of premature peptidyl moieties from peptidyl-tRNA molecules trapped in stalled 50S ribosomal subunits, and thus maintains levels of free tRNAs and 50S ribosomes. This is Peptidyl-tRNA hydrolase from Thermoanaerobacter pseudethanolicus (strain ATCC 33223 / 39E) (Clostridium thermohydrosulfuricum).